Here is a 178-residue protein sequence, read N- to C-terminus: Inorganic pyrophosphatase (178 aa).

The substrate site is built by Lys30, Arg44, and Tyr56. Residues Asp66, Asp71, and Asp103 each coordinate Mg(2+). Residue Tyr142 coordinates substrate.

The protein belongs to the PPase family. In terms of assembly, homohexamer. Mg(2+) serves as cofactor.

It localises to the cytoplasm. It catalyses the reaction diphosphate + H2O = 2 phosphate + H(+). Catalyzes the hydrolysis of inorganic pyrophosphate (PPi) forming two phosphate ions. This Xanthomonas campestris pv. campestris (strain ATCC 33913 / DSM 3586 / NCPPB 528 / LMG 568 / P 25) protein is Inorganic pyrophosphatase.